The sequence spans 357 residues: Eugenol O-methyltransferase (357 aa).

S-adenosyl-L-methionine contacts are provided by G203, D226, D246, M247, and K260. H264 functions as the Proton acceptor in the catalytic mechanism.

It belongs to the class I-like SAM-binding methyltransferase superfamily. Cation-independent O-methyltransferase family. COMT subfamily. In terms of tissue distribution, specifically expressed in the peltate glandular trichomes on the surface of the young basil leaves.

It catalyses the reaction (E)-isoeugenol + S-adenosyl-L-methionine = (E)-isomethyleugenol + S-adenosyl-L-homocysteine + H(+). Its pathway is aromatic compound metabolism; phenylpropanoid biosynthesis. Its function is as follows. Phenylpropene O-methyltransferase that catalyzes the methylation of the para-4-hydroxyl of eugenol to methyleugenol. Can also convert chavicol to methylchavicol but with less affinity. In Ocimum basilicum (Sweet basil), this protein is Eugenol O-methyltransferase (EOMT1).